The primary structure comprises 185 residues: Guanylate kinase (185 aa).

One can recognise a Guanylate kinase-like domain in the interval 4–181; it reads GALYVVSGPS…ACNDLISIIE (178 aa). 11-18 serves as a coordination point for ATP; that stretch reads GPSGAGKS.

It belongs to the guanylate kinase family.

The protein resides in the cytoplasm. The catalysed reaction is GMP + ATP = GDP + ADP. Its function is as follows. Essential for recycling GMP and indirectly, cGMP. The polypeptide is Guanylate kinase (Fusobacterium nucleatum subsp. nucleatum (strain ATCC 25586 / DSM 15643 / BCRC 10681 / CIP 101130 / JCM 8532 / KCTC 2640 / LMG 13131 / VPI 4355)).